A 61-amino-acid polypeptide reads, in one-letter code: Weak toxin CM-2a (61 aa).

4 disulfide bridges follow: Cys3–Cys19, Cys12–Cys37, Cys41–Cys49, and Cys50–Cys55.

This sequence belongs to the three-finger toxin family. Short-chain subfamily. Orphan group XX sub-subfamily. As to expression, expressed by the venom gland.

The protein localises to the secreted. The chain is Weak toxin CM-2a from Naja annulifera (Banded Egyptian cobra).